A 1788-amino-acid chain; its full sequence is Glutamine and serine-rich protein 1 (1788 aa).

A compositionally biased stretch (low complexity) spans 1 to 53; sequence MDAHYAPAGFAEPPAPPASAATQPAAPAWAYEARVPAAASSPSCSGSSPSLKA. Disordered stretches follow at residues 1–69, 472–498, and 532–617; these read MDAH…DVLQ, TRDL…VSQT, and SYSS…SKQD. 4 stretches are compositionally biased toward polar residues: residues 60 to 69, 478 to 492, 532 to 569, and 576 to 594; these read PSQSESDVLQ, VSES…SQGL, SYSS…SAQP, and VQSS…SSIP. Phosphoserine is present on residues Ser-670 and Ser-940. At Thr-1003 the chain carries Phosphothreonine. Ser-1041 is modified (phosphoserine). Disordered regions lie at residues 1104–1163 and 1234–1264; these read QPGD…TDVY and IQTT…VSLS. Lys-1112 is covalently cross-linked (Glycyl lysine isopeptide (Lys-Gly) (interchain with G-Cter in SUMO2)). Positions 1126 to 1136 are enriched in basic and acidic residues; it reads PKEKAKGKEQG. A Glycyl lysine isopeptide (Lys-Gly) (interchain with G-Cter in SUMO2) cross-link involves residue Lys-1137. 3 positions are modified to phosphoserine: Ser-1262, Ser-1281, and Ser-1282. Phosphothreonine is present on Thr-1394. The residue at position 1401 (Ser-1401) is a Phosphoserine. A disordered region spans residues 1494–1588; sequence VCSKKPRNKP…DEGFEPPAPS (95 aa). Low complexity predominate over residues 1510–1537; sequence IPSKPSSISKTSDPPVSKTTTTKTPSTK. Basic and acidic residues predominate over residues 1545-1561; that stretch reads IKAEPPPKKRKKWKEEF. The span at 1562–1575 shows a compositional bias: low complexity; it reads SSSQSESSPEVRSS.

In terms of assembly, interacts with TET1.

It localises to the chromosome. Its function is as follows. Plays an essential role in the protection and maintenance of transcriptional and developmental programs. Protects many bivalent promoters and poised enhancers from hypermethylation, showing a marked preference for these regulatory elements over other types of promoters or enhancers. Mechanistically, cooperates with TET1 and binds to DNA in a common complex to inhibit the binding of DNMT3A/3B and therefore de novo methylation. This Mus musculus (Mouse) protein is Glutamine and serine-rich protein 1.